A 151-amino-acid polypeptide reads, in one-letter code: Ribonuclease H (151 aa).

Residues 1–143 enclose the RNase H type-1 domain; the sequence is MSDVVVIHTD…ADVLATRGLQ (143 aa). 4 residues coordinate Mg(2+): Asp-10, Glu-49, Asp-71, and Asp-135.

It belongs to the RNase H family. Monomer. The cofactor is Mg(2+).

The protein resides in the cytoplasm. It carries out the reaction Endonucleolytic cleavage to 5'-phosphomonoester.. In terms of biological role, endonuclease that specifically degrades the RNA of RNA-DNA hybrids. The sequence is that of Ribonuclease H from Mycolicibacterium gilvum (strain PYR-GCK) (Mycobacterium gilvum (strain PYR-GCK)).